A 454-amino-acid chain; its full sequence is Bifunctional protein GlmU (454 aa).

The interval 1-228 (MNKCAIILAA…FEETLGVNSR (228 aa)) is pyrophosphorylase. UDP-N-acetyl-alpha-D-glucosamine contacts are provided by residues 8–11 (LAAG), K22, Q73, and 78–79 (GT). D103 lines the Mg(2+) pocket. Positions 140, 154, 169, and 226 each coordinate UDP-N-acetyl-alpha-D-glucosamine. N226 is a Mg(2+) binding site. Residues 229 to 249 (AELAKVESIMRNRINRTHLDN) are linker. The interval 250–454 (GVTIIDPLNT…EGWVERKKLK (205 aa)) is N-acetyltransferase. The UDP-N-acetyl-alpha-D-glucosamine site is built by R331 and K349. H361 acts as the Proton acceptor in catalysis. Y364 and N375 together coordinate UDP-N-acetyl-alpha-D-glucosamine. Acetyl-CoA contacts are provided by residues 384–385 (NY), A421, and R438.

The protein in the N-terminal section; belongs to the N-acetylglucosamine-1-phosphate uridyltransferase family. This sequence in the C-terminal section; belongs to the transferase hexapeptide repeat family. Homotrimer. Requires Mg(2+) as cofactor.

It localises to the cytoplasm. The catalysed reaction is alpha-D-glucosamine 1-phosphate + acetyl-CoA = N-acetyl-alpha-D-glucosamine 1-phosphate + CoA + H(+). The enzyme catalyses N-acetyl-alpha-D-glucosamine 1-phosphate + UTP + H(+) = UDP-N-acetyl-alpha-D-glucosamine + diphosphate. Its pathway is nucleotide-sugar biosynthesis; UDP-N-acetyl-alpha-D-glucosamine biosynthesis; N-acetyl-alpha-D-glucosamine 1-phosphate from alpha-D-glucosamine 6-phosphate (route II): step 2/2. It functions in the pathway nucleotide-sugar biosynthesis; UDP-N-acetyl-alpha-D-glucosamine biosynthesis; UDP-N-acetyl-alpha-D-glucosamine from N-acetyl-alpha-D-glucosamine 1-phosphate: step 1/1. It participates in bacterial outer membrane biogenesis; LPS lipid A biosynthesis. Catalyzes the last two sequential reactions in the de novo biosynthetic pathway for UDP-N-acetylglucosamine (UDP-GlcNAc). The C-terminal domain catalyzes the transfer of acetyl group from acetyl coenzyme A to glucosamine-1-phosphate (GlcN-1-P) to produce N-acetylglucosamine-1-phosphate (GlcNAc-1-P), which is converted into UDP-GlcNAc by the transfer of uridine 5-monophosphate (from uridine 5-triphosphate), a reaction catalyzed by the N-terminal domain. In Clostridium perfringens (strain SM101 / Type A), this protein is Bifunctional protein GlmU.